The chain runs to 222 residues: Pyridoxal phosphate homeostasis protein (222 aa).

Lys35 is modified (N6-(pyridoxal phosphate)lysine).

It belongs to the pyridoxal phosphate-binding protein YggS/PROSC family.

Pyridoxal 5'-phosphate (PLP)-binding protein, which is involved in PLP homeostasis. This Helicobacter pylori (strain ATCC 700392 / 26695) (Campylobacter pylori) protein is Pyridoxal phosphate homeostasis protein.